Reading from the N-terminus, the 138-residue chain is Large ribosomal subunit protein uL16 (138 aa).

Over residues 1–15 the composition is skewed to basic residues; it reads MLSPKKVKYRKKQRG. Residues 1–20 are disordered; sequence MLSPKKVKYRKKQRGRLSGE.

The protein belongs to the universal ribosomal protein uL16 family. As to quaternary structure, part of the 50S ribosomal subunit.

Binds 23S rRNA and is also seen to make contacts with the A and possibly P site tRNAs. The protein is Large ribosomal subunit protein uL16 of Borrelia hermsii (strain HS1 / DAH).